We begin with the raw amino-acid sequence, 231 residues long: 5'-methylthioadenosine/S-adenosylhomocysteine nucleosidase (231 aa).

Residue Glu12 is the Proton acceptor of the active site. Substrate contacts are provided by residues Gly78, Val153, and 174 to 175 (ME). Asp198 acts as the Proton donor in catalysis.

Belongs to the PNP/UDP phosphorylase family. MtnN subfamily.

The enzyme catalyses S-adenosyl-L-homocysteine + H2O = S-(5-deoxy-D-ribos-5-yl)-L-homocysteine + adenine. It catalyses the reaction S-methyl-5'-thioadenosine + H2O = 5-(methylsulfanyl)-D-ribose + adenine. The catalysed reaction is 5'-deoxyadenosine + H2O = 5-deoxy-D-ribose + adenine. Its pathway is amino-acid biosynthesis; L-methionine biosynthesis via salvage pathway; S-methyl-5-thio-alpha-D-ribose 1-phosphate from S-methyl-5'-thioadenosine (hydrolase route): step 1/2. Functionally, catalyzes the irreversible cleavage of the glycosidic bond in both 5'-methylthioadenosine (MTA) and S-adenosylhomocysteine (SAH/AdoHcy) to adenine and the corresponding thioribose, 5'-methylthioribose and S-ribosylhomocysteine, respectively. Also cleaves 5'-deoxyadenosine, a toxic by-product of radical S-adenosylmethionine (SAM) enzymes, into 5-deoxyribose and adenine. The sequence is that of 5'-methylthioadenosine/S-adenosylhomocysteine nucleosidase from Vibrio cholerae serotype O1 (strain ATCC 39315 / El Tor Inaba N16961).